We begin with the raw amino-acid sequence, 304 residues long: MHIRILGSAAGGGFPQWNCNCRNCRGVRDGSVAAQPRTQSSIALSDDGERWILCNASPDIRAQIAAFPALQPARRPRDTAIGAIVLLDSQIDHTTGLLSLREGCPHEVWCTQMVHQDLSEGFPLFPMLSHWNGGLRHRPIALDGEPFAIPACPRLRFTAIPLRSSAPPYSPHRGDPHPGDNIGLFVEDLDSAGALFYAPGLGEVDEALLEWMRRADCLLVDGTLWRDDEMLVCEVGDKLGRQMGHLAQSGPGGMLEVLAKVPAARKVLIHINNTNPILDTASAERAELDASGIEVAWDGMHIQL.

It belongs to the PqqB family.

It functions in the pathway cofactor biosynthesis; pyrroloquinoline quinone biosynthesis. Its function is as follows. May be involved in the transport of PQQ or its precursor to the periplasm. The chain is Coenzyme PQQ synthesis protein B from Pseudomonas aeruginosa (strain ATCC 15692 / DSM 22644 / CIP 104116 / JCM 14847 / LMG 12228 / 1C / PRS 101 / PAO1).